A 211-amino-acid polypeptide reads, in one-letter code: Allatostatins MIP (211 aa).

A signal peptide spans 1–24 (MAHTKTRRTYGFLMVLLILGSACG). Positions 25–63 (NLVASGSAGSPPSNEPGGGGLSEQVVLDQLSESDLYGNN) are excised as a propeptide. Tryptophan 74 carries the tryptophan amide modification. Positions 78–148 (SSSGDVSDPD…DDLAGEPDVE (71 aa)) are excised as a propeptide. The segment covering 115–135 (ASGQSAQQQQQQPLQQQSQSG) has biased composition (low complexity). Residues 115–142 (ASGQSAQQQQQQPLQQQSQSGEDFDDLA) are disordered. Residues tryptophan 159, tryptophan 175, tryptophan 189, and tryptophan 202 each carry the tryptophan amide modification. The tract at residues 168 to 190 (WNKFRGAWGKREPTWNNLKGMWG) is disordered. Positions 206-211 (SQLPSN) are excised as a propeptide.

In larvae, strongly expressed in the midgut region before and in between the copper cells, and in a group of cells in the posterior part of the larval midgut. Expressed in the neurons of many areas including the subesophageal ganglion/tritocerebrum (SOG), olfactory glomeruli, lateral ventral protocerebrum, mushroom body, the optic lobe medulla and in the antennal lobes.

It localises to the secreted. Its function is as follows. Ligand for the sex peptide receptor (SPR). Stabilizes sleep and maintains sleep homeostasis to inhibit the activity of wake-promoting circuits, such as those that involve the pigment dispersing factor (pdf) neurons. Regulated by the circadian clock network and pathways associated with a sleep homeostat. May also have a regulatory role in gut motility. The chain is Allatostatins MIP (Mip) from Drosophila melanogaster (Fruit fly).